A 747-amino-acid chain; its full sequence is AMP deaminase 1 (747 aa).

T81 is subject to Phosphothreonine. S85 carries the phosphoserine modification. Y216 is modified (phosphotyrosine). 2 residues coordinate Zn(2+): H303 and H305. Residues H305 and 374-379 (KFNDKY) contribute to the substrate site. A Phosphoserine modification is found at S441. Position 572 (H572) interacts with Zn(2+). Residue E575 coordinates substrate. Catalysis depends on H594, which acts as the Proton acceptor. Residue D649 coordinates Zn(2+). Residue 650-653 (DPMQ) coordinates substrate.

The protein belongs to the metallo-dependent hydrolases superfamily. Adenosine and AMP deaminases family. Homotetramer. Zn(2+) is required as a cofactor.

It carries out the reaction AMP + H2O + H(+) = IMP + NH4(+). The protein operates within purine metabolism; IMP biosynthesis via salvage pathway; IMP from AMP: step 1/1. Its function is as follows. AMP deaminase plays a critical role in energy metabolism. This is AMP deaminase 1 from Rattus norvegicus (Rat).